The following is a 59-amino-acid chain: Large ribosomal subunit protein bL32 (59 aa).

The segment at 1-59 (MAVQQNRKTPSKRGMRRSHDALSGPALSVEPQTGETHRRHHVSPDGYYRGRKVMQGRED) is disordered. Residues 49–59 (RGRKVMQGRED) show a composition bias toward basic residues.

The protein belongs to the bacterial ribosomal protein bL32 family.

In Alkalilimnicola ehrlichii (strain ATCC BAA-1101 / DSM 17681 / MLHE-1), this protein is Large ribosomal subunit protein bL32.